We begin with the raw amino-acid sequence, 84 residues long: Kappa-scoloptoxin(11)-Ssm3a (84 aa).

A signal peptide spans methionine 1–lysine 16.

Belongs to the scoloptoxin-11 family. Contains 2 disulfide bonds. As to expression, expressed by the venom gland.

It localises to the secreted. In terms of biological role, inhibits voltage-gated potassium channel currents in DRG neurons. 200 nM of the toxin inhibits current amplitude by only 25% and even at concentrations up to 5 uM, the toxin does not inhibit all potassium currents. In vivo, insects injected with this toxin showed signs of neurotoxicity including twitching, paralysis, and body contraction. This is Kappa-scoloptoxin(11)-Ssm3a from Scolopendra mutilans (Chinese red-headed centipede).